Reading from the N-terminus, the 116-residue chain is Small ribosomal subunit protein uS13 (116 aa).

Positions Arg-92–Arg-116 are disordered. Over residues Ala-106–Arg-116 the composition is skewed to basic residues.

It belongs to the universal ribosomal protein uS13 family. As to quaternary structure, part of the 30S ribosomal subunit. Forms a loose heterodimer with protein S19. Forms two bridges to the 50S subunit in the 70S ribosome.

Located at the top of the head of the 30S subunit, it contacts several helices of the 16S rRNA. In the 70S ribosome it contacts the 23S rRNA (bridge B1a) and protein L5 of the 50S subunit (bridge B1b), connecting the 2 subunits; these bridges are implicated in subunit movement. Contacts the tRNAs in the A and P-sites. The protein is Small ribosomal subunit protein uS13 of Lactobacillus acidophilus (strain ATCC 700396 / NCK56 / N2 / NCFM).